We begin with the raw amino-acid sequence, 157 residues long: Small ribosomal subunit protein uS7 (157 aa).

It belongs to the universal ribosomal protein uS7 family. In terms of assembly, part of the 30S ribosomal subunit. Contacts proteins S9 and S11.

One of the primary rRNA binding proteins, it binds directly to 16S rRNA where it nucleates assembly of the head domain of the 30S subunit. Is located at the subunit interface close to the decoding center, probably blocks exit of the E-site tRNA. The polypeptide is Small ribosomal subunit protein uS7 (Caldicellulosiruptor bescii (strain ATCC BAA-1888 / DSM 6725 / KCTC 15123 / Z-1320) (Anaerocellum thermophilum)).